The sequence spans 487 residues: 3-ketoacyl-CoA synthase 17 (487 aa).

2 helical membrane passes run Leu-23–Val-43 and Ser-57–Ser-77. An FAE domain is found at Phe-74–Leu-363. Active-site residues include Cys-218, His-297, His-382, His-386, His-415, and Asn-419.

The protein belongs to the thiolase-like superfamily. Chalcone/stilbene synthases family. In terms of tissue distribution, expressed in flowers.

The protein resides in the membrane. The catalysed reaction is a very-long-chain acyl-CoA + malonyl-CoA + H(+) = a very-long-chain 3-oxoacyl-CoA + CO2 + CoA. It participates in lipid metabolism; fatty acid biosynthesis. With respect to regulation, inhibited by K3 herbicides such as alachlor, allidochlor, anilofos, cafenstrole, fentrazamide and flufenacet. Strongly inhibited by metazachlor. Its function is as follows. Active on saturated acyl-CoAs up to C22. Mediates the synthesis of VLCFAs from 20 to 26 carbons in length (e.g. C20:1, C20, C24, C26). The polypeptide is 3-ketoacyl-CoA synthase 17 (Arabidopsis thaliana (Mouse-ear cress)).